Consider the following 792-residue polypeptide: MSAGTAPAAPRYAPDDPSLPKPWRGLVDGTTGYLYYWNPETNITQYEKPLPPEDQLPPPPPLPPPPPRSGRGDRDRDRRDRSRSRTPPRRDHRDRDRDRDRRHDDHRSAPSHHHPLPAAAAIAADDPSTEAYRHRHEITVVGDNVPAPITSFETGGFPPEILKEIQRAGFSSPTPIQAQSWPIALQCQDVVAIAKTGSGKTLGYLLPGFMHIKRLQNNPRSGPTVLVLAPTRELATQILEEAVKFGRSSRISSTCLYGGAPKGPQLRDLDRGVDVVVATPGRLNDILEMRRISLKQVSYLVLDEADRMLDMGFEPQIRKIVKEIPPRRQTLMYTATWPKEVRRIAEDLLVHPVQVTIGSVDELVANSAITQNVELITPSEKLRRLEQILRSQDSGSKVLIFCTTKRMCDQLARTLTRQFGASAIHGDKSQSEREKVLSHFRSGRSPILVATDVAARGLDIKDIRVVINYDFPTGIEDYVHRIGRTGRAGATGVAYTFFCDQDSKYAADLIKILEGANQRVPRDLADMASRGGRGGRKRNRWATRSDRGGSHSELDSRYGGRDGLSGSSGRLDSSRSSRRHDYGDDGRSRRSGRGRSRSRSRSDSDRYSRSPKRSRRHSRSRTRSRSRSRSRSYTRNRRASRSRSRSPGASRRHERSATGSGSALPDSGHGERKRTPEADPSRNHTNHSDPKDDRHPEDGKVGKVDLDRSPTPQDKSGPYSPAYNGKTSRSVSPGNQVEGNNKAAEVSKNPDPSSPPHHGKTREDEEEGMIDEDGEIADDPRANATVQNGGDN.

The segment covering 1 to 16 (MSAGTAPAAPRYAPDD) has biased composition (low complexity). 2 disordered regions span residues 1 to 25 (MSAGTAPAAPRYAPDDPSLPKPWRG) and 44 to 118 (TQYE…PLPA). Positions 17 to 51 (PSLPKPWRGLVDGTTGYLYYWNPETNITQYEKPLP) constitute a WW domain. Over residues 52 to 68 (PEDQLPPPPPLPPPPPR) the composition is skewed to pro residues. Composition is skewed to basic and acidic residues over residues 70–80 (GRGDRDRDRRD) and 88–108 (PRRDHRDRDRDRDRRHDDHRS). The Q motif signature appears at 150 to 178 (TSFETGGFPPEILKEIQRAGFSSPTPIQA). Residues 181 to 355 (WPIALQCQDV…EDLLVHPVQV (175 aa)) enclose the Helicase ATP-binding domain. ATP is bound at residue 194 to 201 (AKTGSGKT). A DEAD box motif is present at residues 303-306 (DEAD). The region spanning 384–528 (RLEQILRSQD…RVPRDLADMA (145 aa)) is the Helicase C-terminal domain. Positions 523–792 (DLADMASRGG…NATVQNGGDN (270 aa)) are disordered. 2 stretches are compositionally biased toward basic and acidic residues: residues 543-560 (TRSDRGGSHSELDSRYGG) and 572-588 (DSSRSSRRHDYGDDGRS). Basic residues-rich tracts occupy residues 589–599 (RRSGRGRSRSR) and 609–654 (RSPK…RRHE). Residues 668-708 (GHGERKRTPEADPSRNHTNHSDPKDDRHPEDGKVGKVDLDR) show a composition bias toward basic and acidic residues. A compositionally biased stretch (polar residues) spans 725–739 (GKTSRSVSPGNQVEG). Over residues 764-777 (DEEEGMIDEDGEIA) the composition is skewed to acidic residues.

The protein belongs to the DEAD box helicase family. DDX5/DBP2 subfamily.

It is found in the nucleus. The enzyme catalyses ATP + H2O = ADP + phosphate + H(+). ATP-dependent RNA helicase involved nonsense-mediated mRNA decay and ribosome biogenesis through rRNA processing. This Oryza sativa subsp. japonica (Rice) protein is DEAD-box ATP-dependent RNA helicase 40.